Consider the following 488-residue polypeptide: Ribulose bisphosphate carboxylase large chain (488 aa).

Residues N127 and T177 each coordinate substrate. The active-site Proton acceptor is the K179. K181 contributes to the substrate binding site. Residues K205, D207, and E208 each coordinate Mg(2+). K205 carries the post-translational modification N6-carboxylysine. H297 (proton acceptor) is an active-site residue. Substrate-binding residues include R298, H330, and S382.

Belongs to the RuBisCO large chain family. Type I subfamily. As to quaternary structure, heterohexadecamer of 8 large chains and 8 small chains. Requires Mg(2+) as cofactor.

It is found in the plastid. The protein localises to the chloroplast. It carries out the reaction 2 (2R)-3-phosphoglycerate + 2 H(+) = D-ribulose 1,5-bisphosphate + CO2 + H2O. It catalyses the reaction D-ribulose 1,5-bisphosphate + O2 = 2-phosphoglycolate + (2R)-3-phosphoglycerate + 2 H(+). In terms of biological role, ruBisCO catalyzes two reactions: the carboxylation of D-ribulose 1,5-bisphosphate, the primary event in carbon dioxide fixation, as well as the oxidative fragmentation of the pentose substrate in the photorespiration process. Both reactions occur simultaneously and in competition at the same active site. The chain is Ribulose bisphosphate carboxylase large chain from Pyropia suborbiculata (Red alga).